Here is a 97-residue protein sequence, read N- to C-terminus: Small ribosomal subunit protein bS20c (97 aa).

Polar residues predominate over residues 1-15; it reads MSKNVSAIKKNQVSL. Residues 1-20 are disordered; it reads MSKNVSAIKKNQVSLRNKRK.

This sequence belongs to the bacterial ribosomal protein bS20 family.

The protein resides in the plastid. It localises to the chloroplast. In terms of biological role, binds directly to 16S ribosomal RNA. The protein is Small ribosomal subunit protein bS20c of Gracilaria tenuistipitata var. liui (Red alga).